The primary structure comprises 268 residues: Testis-specific serine/threonine-protein kinase 3 (268 aa).

Residues 10–265 enclose the Protein kinase domain; it reads YQLGKTIGEG…IEEVSWHPWL (256 aa). ATP-binding positions include 16–24 and Lys39; that span reads IGEGTYSKV. The active-site Proton acceptor is Asp134. Ser166 carries the post-translational modification Phosphoserine. Phosphothreonine is present on Thr168.

The protein belongs to the protein kinase superfamily. CAMK Ser/Thr protein kinase family. Mg(2+) is required as a cofactor. Requires Mn(2+) as cofactor. Autophosphorylated at Ser-166. Phosphorylation at Thr-168 by PDPK1 activates the serine/threonine protein kinase activity.

It localises to the cell projection. It is found in the cilium. The protein resides in the flagellum. It carries out the reaction L-seryl-[protein] + ATP = O-phospho-L-seryl-[protein] + ADP + H(+). The enzyme catalyses L-threonyl-[protein] + ATP = O-phospho-L-threonyl-[protein] + ADP + H(+). With respect to regulation, activated by phosphorylation on Thr-168 by PDPK1. In terms of biological role, serine/threonine protein kinase required for spermatid development and male fertility. In Homo sapiens (Human), this protein is Testis-specific serine/threonine-protein kinase 3.